The primary structure comprises 912 residues: MKLKHLTIFLFIFIYRFLFVKSDCYLINNERPETKITKIRCDDQVISILLNPNNRTDATLEKDTDGKFYFDVVNFPYKDRLCDYTYDIYFLPEIPSLPSVPTIGGSVNFTYNYPCTSVYGRIKPLNIANKIVTPYNINLDQFTMRIQPGCGDLIINSGSRVIYNASYQTGDIPNKPTIDDQGNITIQGSNLYNTQIKINSNDPVENLNPTGNLDSTHSTIVFSLPESQYQGNWTIDVTICDVFYKSYLYTFLPIITVMEGVLNDNGGNLTFTGDHLSVNPSTTISGHFGGKPISCFAGTSKSVICSIPSRSEYGGSGYDVPLNVTIGKYTTNTIKISYDLPLIQGVSQRGTSQIFNVSGVYFSGVISMTIITGANIKTNILKKPTPTLEEPGFFIESNNTIFIFLPNNTQPGFMNLIVGDGGSKSFTSPRYNFKITPTITAGQSFKSNTIGGDLIISGIFMRTVDSDGRDVPLTVKSEPGGPICDPLKDGDGLSFTCVLKSGFGSSHTMNVYYNLLPVGSFVVSYNPPYLASSDQEKDGTIQINGNNLGESVSNSIITVVYLDGSRANGTVVESSHNLLTFQYPAGNKNTASYLFQLGDQISNMAGPFTLKPVIENNNPAVPCGGGMVTINGHYFFNYTKDTTTITIGKVPCNISSINVTTIECVILPNLKSLSPYYTSGSKPLIISSSNSATEKVYQSSITGYSNYTFAPPTITNTSDIDQTALITIYGTSFGDANLEILIDGKPCTQPEINIHTYSSLTCNVTNYDEMLKYNYSNTKFNISISVDGQYFIAQIFQFKYESTISYSENKSSGFPNEMYIGIVAIIIFLALIFFAIKTQVEKYIEERRARKAFRSVDNLRLKLREKHAAEIAKHYSFGYESAPKPNKSYFYDLGKKLSRLPLIRCCFKEHTD.

The N-terminal stretch at 1–22 (MKLKHLTIFLFIFIYRFLFVKS) is a signal peptide. At 23 to 815 (DCYLINNERP…YSENKSSGFP (793 aa)) the chain is on the extracellular side. 20 N-linked (GlcNAc...) asparagine glycosylation sites follow: Asn-54, Asn-108, Asn-164, Asn-183, Asn-232, Asn-268, Asn-323, Asn-356, Asn-398, Asn-407, Asn-568, Asn-637, Asn-653, Asn-658, Asn-706, Asn-716, Asn-763, Asn-774, Asn-781, and Asn-809. IPT/TIG domains follow at residues 532-609 (SSDQ…GPFT) and 612-686 (PVIE…PLII). The 82-residue stretch at 715–796 (TNTSDIDQTA…DGQYFIAQIF (82 aa)) folds into the IPT/TIG 3 domain. The chain crosses the membrane as a helical span at residues 816-836 (NEMYIGIVAIIIFLALIFFAI). Topologically, residues 837–912 (KTQVEKYIEE…IRCCFKEHTD (76 aa)) are cytoplasmic.

Its subcellular location is the cell membrane. This Dictyostelium discoideum (Social amoeba) protein is Tiger protein E1 (tgrE1).